Reading from the N-terminus, the 289-residue chain is Pyridoxal kinase PdxY (289 aa).

Residues serine 9 and 44-45 (TQ) contribute to the substrate site. Aspartate 112, alanine 144, glutamate 149, and lysine 182 together coordinate ATP. Aspartate 225 serves as a coordination point for substrate.

The protein belongs to the pyridoxine kinase family. PdxY subfamily. Homodimer. The cofactor is Mg(2+).

It carries out the reaction pyridoxal + ATP = pyridoxal 5'-phosphate + ADP + H(+). It participates in cofactor metabolism; pyridoxal 5'-phosphate salvage; pyridoxal 5'-phosphate from pyridoxal: step 1/1. Functionally, pyridoxal kinase involved in the salvage pathway of pyridoxal 5'-phosphate (PLP). Catalyzes the phosphorylation of pyridoxal to PLP. The protein is Pyridoxal kinase PdxY of Aliivibrio fischeri (strain ATCC 700601 / ES114) (Vibrio fischeri).